The chain runs to 741 residues: Copper-transporting ATPase (741 aa).

The region spanning 1–67 (MKESFYIEGM…LIEKLGYSPK (67 aa)) is the HMA domain. Over 1–83 (MKESFYIEGM…KKEFFSPNVK (83 aa)) the chain is Cytoplasmic. Cysteine 12 and cysteine 15 together coordinate Cu cation. A helical membrane pass occupies residues 84–104 (LALAVIFTLFVVYLSMGAMLS). Residues 105 to 124 (PSLLPESLLTINNHSNFLNA) lie on the Extracellular side of the membrane. The helical transmembrane segment at 125–144 (CLQLIGTLIVMHLGRDFYIQ) threads the bilayer. The Cytoplasmic portion of the chain corresponds to 145–151 (GFKALWH). Residues 152-172 (RQPNMSSLIAIGTSAALISSL) form a helical membrane-spanning segment. The Extracellular segment spans residues 173 to 190 (WQLYFVYTSQWSYGHYYF). Residues 191–211 (ESVCVILMFVMVGKRIENVSK) traverse the membrane as a helical segment. The Cytoplasmic portion of the chain corresponds to 212–339 (DKALDAMQAL…KAEISRLADK (128 aa)). A helical membrane pass occupies residues 340–362 (VSSVFVPSVIAIAILAFVVWLII). Residues 363 to 375 (APKPDFWWNFGIA) lie on the Extracellular side of the membrane. A helical transmembrane segment spans residues 376-393 (LEVFVSVLVISCPCALGL). Over 394–681 (ATPMSILVAN…KLSQATIKNI (288 aa)) the chain is Cytoplasmic. Aspartate 431 functions as the 4-aspartylphosphate intermediate in the catalytic mechanism. Mg(2+) contacts are provided by aspartate 627 and aspartate 631. The chain crosses the membrane as a helical span at residues 682–701 (KENLFWAFCYNSVFIPLACG). Residues 702 to 712 (VLYKANIMLSP) are Extracellular-facing. The chain crosses the membrane as a helical span at residues 713–731 (AIAGLAMSLSSVSVVLNSQ). Over 732–741 (RLRNFKIKDH) the chain is Cytoplasmic.

This sequence belongs to the cation transport ATPase (P-type) (TC 3.A.3) family. Type IB subfamily.

The protein resides in the cell membrane. It carries out the reaction Cu(2+)(in) + ATP + H2O = Cu(2+)(out) + ADP + phosphate + H(+). Probably involved in copper export. The polypeptide is Copper-transporting ATPase (copA) (Helicobacter pylori (Campylobacter pylori)).